A 225-amino-acid chain; its full sequence is MSNKKAVILVSGGLDSTTALAIAQSEGYECYTLSFDYGQRHRVELEAAQRVSDKMHVAQHKVVQLDLKSIGGSALTDDDIAVPEDGPEGIPVTYVPARNTVFLSIALGWAEVLNAEAIFIGVNAVDYSGYPDCRPEYIAAFQKLAMLATKVGVEGKPLQIKTPLIDMTKAEIVQLGMRLGVDYSATVSCYQANVDGEACGRCDSCRLRRKGFEDAQMEDPTRYAN.

10–20 (VSGGLDSTTAL) is an ATP binding site. Positions 189, 199, 202, and 205 each coordinate Zn(2+).

The protein belongs to the QueC family. It depends on Zn(2+) as a cofactor.

The catalysed reaction is 7-carboxy-7-deazaguanine + NH4(+) + ATP = 7-cyano-7-deazaguanine + ADP + phosphate + H2O + H(+). It participates in purine metabolism; 7-cyano-7-deazaguanine biosynthesis. Catalyzes the ATP-dependent conversion of 7-carboxy-7-deazaguanine (CDG) to 7-cyano-7-deazaguanine (preQ(0)). This Saccharophagus degradans (strain 2-40 / ATCC 43961 / DSM 17024) protein is 7-cyano-7-deazaguanine synthase.